The chain runs to 311 residues: MEIPEEVKKRLTIPFEENFFAGHTACQGCGASLGLRYVLKAYGRKTIVVIPACCSTIIAGPWPYSALNANLFHTAFATTGAVISGIEAGLKALGYKVKGEDGIMVVGWAGDGGTADIGLQALSGFIERGHDAVYIMYDNEAYMNTGIQRSSSTPYGAWTTNTPGGKRHLLEKRHKKKVIDIVIAHRIPYAATASVAYPEDFIRKLKKAQKIPGPSFIQLFAPCPTGWRAPTDKSIEIARLAVQTAYFPLFEYENGKYKINMPNPKKEPKPIEEFLKLQGRFKYMTKEDVEALQKWVLEEWERLKKLAEVFG.

Heterotetramer of one alpha, one beta, one delta and one gamma chain.

It carries out the reaction 3-methyl-2-oxobutanoate + 2 oxidized [2Fe-2S]-[ferredoxin] + CoA = 2-methylpropanoyl-CoA + 2 reduced [2Fe-2S]-[ferredoxin] + CO2 + H(+). In Pyrococcus horikoshii (strain ATCC 700860 / DSM 12428 / JCM 9974 / NBRC 100139 / OT-3), this protein is Ketoisovalerate oxidoreductase subunit VorB (vorB).